A 170-amino-acid chain; its full sequence is Putative pre-16S rRNA nuclease (170 aa).

Positions 1–29 (MVAASHRSPDRPGDPEGLEPGTGRGRRLG) are disordered.

It belongs to the YqgF nuclease family.

It localises to the cytoplasm. Its function is as follows. Could be a nuclease involved in processing of the 5'-end of pre-16S rRNA. The polypeptide is Putative pre-16S rRNA nuclease (Mycobacterium ulcerans (strain Agy99)).